Reading from the N-terminus, the 126-residue chain is Late histone H2A.L3 (126 aa).

Residues Met1–Ala20 are disordered. Residue Ser2 is modified to N-acetylserine. A Phosphoserine modification is found at Ser2. The span at Gly7–Ser19 shows a compositional bias: basic residues. The residue at position 105 (Gln105) is an N5-methylglutamine. Lys120 is covalently cross-linked (Glycyl lysine isopeptide (Lys-Gly) (interchain with G-Cter in ubiquitin)).

Belongs to the histone H2A family. In terms of assembly, the nucleosome is a histone octamer containing two molecules each of H2A, H2B, H3 and H4 assembled in one H3-H4 heterotetramer and two H2A-H2B heterodimers. The octamer wraps approximately 147 bp of DNA. Monoubiquitination of Lys-120 gives a specific tag for epigenetic transcriptional repression. In terms of processing, phosphorylation of Ser-2 directly represses transcription.

It localises to the nucleus. The protein localises to the chromosome. Core component of nucleosome. Nucleosomes wrap and compact DNA into chromatin, limiting DNA accessibility to the cellular machineries which require DNA as a template. Histones thereby play a central role in transcription regulation, DNA repair, DNA replication and chromosomal stability. DNA accessibility is regulated via a complex set of post-translational modifications of histones, also called histone code, and nucleosome remodeling. This Strongylocentrotus purpuratus (Purple sea urchin) protein is Late histone H2A.L3.